We begin with the raw amino-acid sequence, 898 residues long: DNA gyrase subunit A (898 aa).

2 disordered regions span residues 1 to 22 (MSDD…DDDS) and 36 to 56 (EEEK…EKEG). The region spanning 97-562 (LPDARDGLKP…VMSSINNEDL (466 aa)) is the Topo IIA-type catalytic domain. The active-site O-(5'-phospho-DNA)-tyrosine intermediate is Tyr185. A GyrA-box motif is present at residues 589–595 (QRRGGVG).

Belongs to the type II topoisomerase GyrA/ParC subunit family. In terms of assembly, heterotetramer, composed of two GyrA and two GyrB chains. In the heterotetramer, GyrA contains the active site tyrosine that forms a transient covalent intermediate with DNA, while GyrB binds cofactors and catalyzes ATP hydrolysis.

It is found in the cytoplasm. It catalyses the reaction ATP-dependent breakage, passage and rejoining of double-stranded DNA.. In terms of biological role, a type II topoisomerase that negatively supercoils closed circular double-stranded (ds) DNA in an ATP-dependent manner to modulate DNA topology and maintain chromosomes in an underwound state. Negative supercoiling favors strand separation, and DNA replication, transcription, recombination and repair, all of which involve strand separation. Also able to catalyze the interconversion of other topological isomers of dsDNA rings, including catenanes and knotted rings. Type II topoisomerases break and join 2 DNA strands simultaneously in an ATP-dependent manner. In Metamycoplasma arthritidis (strain 158L3-1) (Mycoplasma arthritidis), this protein is DNA gyrase subunit A.